A 270-amino-acid chain; its full sequence is ATP synthase subunit a (270 aa).

Transmembrane regions (helical) follow at residues 29-49, 87-107, 108-128, 140-160, 182-202, 220-240, and 241-261; these read VDTF…FAMV, IAPL…MDLF, PVDL…GLEP, DVNA…GFSI, PVGA…ELAA, LIFI…GAPW, and AIFH…LTIV.

Belongs to the ATPase A chain family. In terms of assembly, F-type ATPases have 2 components, CF(1) - the catalytic core - and CF(0) - the membrane proton channel. CF(1) has five subunits: alpha(3), beta(3), gamma(1), delta(1), epsilon(1). CF(0) has three main subunits: a(1), b(2) and c(9-12). The alpha and beta chains form an alternating ring which encloses part of the gamma chain. CF(1) is attached to CF(0) by a central stalk formed by the gamma and epsilon chains, while a peripheral stalk is formed by the delta and b chains.

The protein localises to the cell inner membrane. Its function is as follows. Key component of the proton channel; it plays a direct role in the translocation of protons across the membrane. This Chromobacterium violaceum (strain ATCC 12472 / DSM 30191 / JCM 1249 / CCUG 213 / NBRC 12614 / NCIMB 9131 / NCTC 9757 / MK) protein is ATP synthase subunit a.